Consider the following 248-residue polypeptide: MNKELLLGVNIDHIATIRQARGTRYPDPVQAAMDAEEAGADGITLHMREDLRHIQARDVRLIKQVLQTRMNLELAVTEAMLDFAEEISPEHSCLVPEKREELTTEGGLDILTHRNVVEKAVRRLQLMGSEVSLFIDPDKEQIRAAVDVGAPVIELHTGCYADATSEEKQHYELQRIKEAAEFAASLNLVVNAGHGLHYHNVKPIAAIRELNELNIGHAIIARALFCGLKEAVRHMRQLMQEARLYVND.

Asn10 provides a ligand contact to 3-amino-2-oxopropyl phosphate. 1-deoxy-D-xylulose 5-phosphate is bound at residue 12-13 (DH). Arg21 provides a ligand contact to 3-amino-2-oxopropyl phosphate. Catalysis depends on His46, which acts as the Proton acceptor. Positions 48 and 53 each coordinate 1-deoxy-D-xylulose 5-phosphate. The active-site Proton acceptor is Glu73. A 1-deoxy-D-xylulose 5-phosphate-binding site is contributed by Thr103. His194 serves as the catalytic Proton donor. 3-amino-2-oxopropyl phosphate contacts are provided by residues Gly195 and 216–217 (GH).

It belongs to the PNP synthase family. Homooctamer; tetramer of dimers.

It is found in the cytoplasm. The enzyme catalyses 3-amino-2-oxopropyl phosphate + 1-deoxy-D-xylulose 5-phosphate = pyridoxine 5'-phosphate + phosphate + 2 H2O + H(+). Its pathway is cofactor biosynthesis; pyridoxine 5'-phosphate biosynthesis; pyridoxine 5'-phosphate from D-erythrose 4-phosphate: step 5/5. Functionally, catalyzes the complicated ring closure reaction between the two acyclic compounds 1-deoxy-D-xylulose-5-phosphate (DXP) and 3-amino-2-oxopropyl phosphate (1-amino-acetone-3-phosphate or AAP) to form pyridoxine 5'-phosphate (PNP) and inorganic phosphate. In Legionella pneumophila (strain Lens), this protein is Pyridoxine 5'-phosphate synthase.